An 854-amino-acid polypeptide reads, in one-letter code: pH-response regulator protein palA/prr-1 (854 aa).

The BRO1 domain occupies 5 to 402 (HVLSLPFRKS…SELESMTSQL (398 aa)). The stretch at 632 to 699 (RLDRLYESEL…DAAYYKYKEI (68 aa)) forms a coiled coil. Disordered regions lie at residues 739–782 (EEEI…EPIQ) and 801–854 (PQQQ…IRFG). The segment covering 746–759 (PLSSLNMHQSSFSY) has biased composition (polar residues). The segment covering 767 to 782 (QPPPPPPQIPFPEPIQ) has biased composition (pro residues). A compositionally biased stretch (low complexity) spans 827-839 (QGQQHQQEQGQPG).

This sequence belongs to the palA/RIM20 family. Interacts with pacc-1 by binding to its two YPX[LI] motifs.

Its function is as follows. Required for the proteolytic cleavage of the transcription factor pacc-1 in response to alkaline ambient pH. May act as a scaffold protein that recruits the calpain-like protease palB/cpr-8 via snf7/vps-3 to its substrate pacc-1. This is pH-response regulator protein palA/prr-1 (prr-1) from Neurospora crassa (strain ATCC 24698 / 74-OR23-1A / CBS 708.71 / DSM 1257 / FGSC 987).